The sequence spans 229 residues: Large ribosomal subunit protein uL1 (229 aa).

The protein belongs to the universal ribosomal protein uL1 family. As to quaternary structure, part of the 50S ribosomal subunit.

Functionally, binds directly to 23S rRNA. The L1 stalk is quite mobile in the ribosome, and is involved in E site tRNA release. In terms of biological role, protein L1 is also a translational repressor protein, it controls the translation of the L11 operon by binding to its mRNA. This chain is Large ribosomal subunit protein uL1, found in Clostridium tetani (strain Massachusetts / E88).